The primary structure comprises 191 residues: MLSSIKCVLVGDSAVGKTSLLVRFTSETFPEAYKPTVYENTGVDVFMDGIQISLGLWDTAGNDAFRSIRPLSYQQADVVLMCYSVANHNSFLNLKNKWISEIRSNLPCTPVLVVATQTDQREVGPHRASCINAIEGKRLAQDVRAKGYLECSALSNRGVQQVFECAVRTAVNQARRRNRRKLFSINECKIF.

Residue 11–18 (GDSAVGKT) coordinates GTP. The Effector region motif lies at 33–41 (YKPTVYENT). 58–62 (DTAGN) is a binding site for GTP. An interaction with ZAP70 region spans residues 73–86 (YQQADVVLMCYSVA). 116–119 (TQTD) lines the GTP pocket. Cys188 bears the Cysteine methyl ester mark. A lipid anchor (S-geranylgeranyl cysteine) is attached at Cys188. Positions 189–191 (KIF) are cleaved as a propeptide — removed in mature form.

Belongs to the small GTPase superfamily. Rho family. In terms of assembly, interacts with GDI1 and GDI2. Interacts with ZAP70 (via SH2 domains) and the interaction is enhanced by its phosphorylation by LCK. Interacts with SYK and the interaction is enhanced by its phosphorylation by FYN. Phosphorylated on tyrosine by LCK. Phosphorylated by FYN. Phosphorylation enhances the interactions with ZAP70 and SYK and is critical for its function in thymocyte development. Expression is widespread in hematopoietic cells, including in bone marrow progenitor cells and in differentiated myeloid as well as lymphoid cells. Expressed at high levels in the thymus and mast cells, found in spleen and low-density bone marrow (LDBM) cells and is detected at a low level in neutrophils. In the thymus it is detected in thymocytes of the thymic cortex but not in non-lymphoid cells of fibrovascular and fibroadipose tissues. Expressed in T-cells, B-cells and mast cells.

Its subcellular location is the cytoplasm. The protein localises to the cell membrane. Binds GTP but lacks intrinsic GTPase activity and is resistant to Rho-specific GTPase-activating proteins. Inhibits the activation of NF-kappa-B by TNF and IKKB and the activation of CRK/p38 by TNF. Inhibits activities of RAC1, RHOA and CDC42. Negatively regulates leukotriene production in neutrophils. Negative regulator of hematopoietic progenitor cell proliferation, survival and migration. Critical regulator of thymocyte development and T-cell antigen receptor (TCR) signaling by mediating recruitment and activation of ZAP70. Required for phosphorylation of CD3Z, membrane translocation of ZAP70 and subsequent activation of the ZAP70-mediated pathways. Essential for efficient beta-selection and positive selection by promoting the ZAP70-dependent phosphorylation of the LAT signalosome during pre-TCR and TCR signaling. Crucial for thymocyte maturation during DN3 to DN4 transition and during positive selection. Plays critical roles in mast cell function by facilitating phosphorylation of SYK in Fc epsilon RI-mediated signal transduction. Essential for the phosphorylation of LAT, LCP2, PLCG1 and PLCG2 and for Ca(2+) mobilization in mast cells. The chain is Rho-related GTP-binding protein RhoH (Rhoh) from Mus musculus (Mouse).